Consider the following 505-residue polypeptide: Maturase K (505 aa).

This sequence belongs to the intron maturase 2 family. MatK subfamily.

It localises to the plastid. Its subcellular location is the chloroplast. Usually encoded in the trnK tRNA gene intron. Probably assists in splicing its own and other chloroplast group II introns. The sequence is that of Maturase K from Beta vulgaris (Sugar beet).